The primary structure comprises 273 residues: Tryptase (273 aa).

The signal sequence occupies residues 1-18; that stretch reads MLKLLLLTLPLLSSLVHA. Residues 19–28 constitute a propeptide, activation peptide; sequence APGPAMTREG. The 242-residue stretch at 29 to 270 folds into the Peptidase S1 domain; that stretch reads IVGGQEAHGN…YLDWIHHYVP (242 aa). Residue Asn49 is glycosylated (N-linked (GlcNAc...) asparagine). Cys57 and Cys73 are oxidised to a cystine. Active-site charge relay system residues include His72 and Asp119. An N-linked (GlcNAc...) asparagine glycan is attached at Asn130. 3 disulfides stabilise this stretch: Cys153–Cys228, Cys186–Cys209, and Cys218–Cys246. Residue Ser222 is the Charge relay system of the active site.

This sequence belongs to the peptidase S1 family. Tryptase subfamily.

It catalyses the reaction Preferential cleavage: Arg-|-Xaa, Lys-|-Xaa, but with more restricted specificity than trypsin.. Tryptase is the major neutral protease present in mast cells and is secreted upon the coupled activation-degranulation response of this cell type. May play a role in innate immunity. This chain is Tryptase (Tpsab1), found in Mus musculus (Mouse).